The chain runs to 651 residues: MBT domain-containing protein 1 (651 aa).

The segment at S21 to L55 is disordered. A compositionally biased stretch (low complexity) spans D29–S41. An FCS-type zinc finger spans residues P68–R103. C77, C80, C97, and C101 together coordinate Zn(2+). 4 MBT repeats span residues F164–P268, T276–R373, F374–P479, and F487–P583. Disordered stretches follow at residues Q581–H610 and T629–P651. Positions Q586–S596 are enriched in low complexity. Positions K597–H610 are enriched in basic residues. Residues Q632 to G643 show a composition bias toward polar residues.

Monomer. Component of the NuA4 histone acetyltransferase complex.

It is found in the nucleus. The protein localises to the chromosome. In terms of biological role, chromatin reader component of the NuA4 histone acetyltransferase complex, a multiprotein complex involved in transcriptional activation of select genes principally by acetylation of nucleosomal histones H4 and H2A. The NuA4 complex plays a direct role in repair of DNA double-strand breaks (DSBs) by promoting homologous recombination (HR). MBTD1 specifically recognizes and binds monomethylated and dimethylated 'Lys-20' on histone H4 (H4K20me1 and H4K20me2, respectively). In the NuA4 complex, MBTD1 promotes recruitment of the complex to H4K20me marks by competing with TP53BP1 for binding to H4K20me. Following recruitment to H4K20me at DNA breaks, the NuA4 complex catalyzes acetylation of 'Lys-15' on histone H2A (H2AK15), blocking the ubiquitination mark required for TP53BP1 localization at DNA breaks, thereby promoting homologous recombination (HR). The chain is MBT domain-containing protein 1 from Xenopus tropicalis (Western clawed frog).